Consider the following 1420-residue polypeptide: DNA-directed RNA polymerase subunit beta' (1420 aa).

The Zn(2+) site is built by Cys-70, Cys-72, Cys-85, and Cys-88. Mg(2+) contacts are provided by Asp-464, Asp-466, and Asp-468. Residues Cys-823, Cys-897, Cys-904, and Cys-907 each coordinate Zn(2+).

The protein belongs to the RNA polymerase beta' chain family. As to quaternary structure, the RNAP catalytic core consists of 2 alpha, 1 beta, 1 beta' and 1 omega subunit. When a sigma factor is associated with the core the holoenzyme is formed, which can initiate transcription. Mg(2+) serves as cofactor. Zn(2+) is required as a cofactor.

The catalysed reaction is RNA(n) + a ribonucleoside 5'-triphosphate = RNA(n+1) + diphosphate. DNA-dependent RNA polymerase catalyzes the transcription of DNA into RNA using the four ribonucleoside triphosphates as substrates. The sequence is that of DNA-directed RNA polymerase subunit beta' from Polynucleobacter asymbioticus (strain DSM 18221 / CIP 109841 / QLW-P1DMWA-1) (Polynucleobacter necessarius subsp. asymbioticus).